Consider the following 505-residue polypeptide: Betaine aldehyde dehydrogenase 1 (505 aa).

163 to 172 provides a ligand contact to betaine aldehyde; that stretch reads WNYPLLMATW. Residue 240–245 coordinates NAD(+); that stretch reads GSTETG. Betaine aldehyde is bound by residues E262, 294–297, and C455; that span reads QVCS. Catalysis depends on residues E262 and C296. 4-aminobutanal-binding positions include 262-263 and C296; that span reads EL. Position 461 (W461) interacts with 4-aminobutanal. The Microbody targeting signal signature appears at 503-505; that stretch reads SKL.

The protein belongs to the aldehyde dehydrogenase family. Homodimer.

The protein localises to the peroxisome. It catalyses the reaction betaine aldehyde + NAD(+) + H2O = glycine betaine + NADH + 2 H(+). The protein operates within amine and polyamine biosynthesis; betaine biosynthesis via choline pathway; betaine from betaine aldehyde: step 1/1. Functionally, dehydrogenase that can use N-acetyl-gamma-aminobutyraldehyde (NAGABald), gamma-guanidinobutyraldehyde (GGBald), betaine aldehyde (Bet-ald), gamma-aminobutyraldehyde (GAB-ald), acetaldehyde, 4-aminobutylaldehyde (AB-ald), 3-aminopropionaldehyde (AP-ald), 4-N-trimethylaminobutyraldehyde (TMAB-ald) and 3-N-trimethylaminopropionaldehyde (TMAP-ald) as substrates. Catalyzes the oxidation of GAB-ald more efficiently than Bet-ald. May convert acetaldehyde into acetate, thus facilitating the production of acetyl-CoA in peroxisomes under anaerobic conditions. The chain is Betaine aldehyde dehydrogenase 1 (BADH1) from Oryza sativa subsp. japonica (Rice).